A 470-amino-acid polypeptide reads, in one-letter code: Dynein axonemal assembly factor 11 (470 aa).

4 LRR repeats span residues 20 to 43 (IFSL…DKWC), 44 to 65 (RELK…VSKL), 66 to 89 (KKLE…GCES), and 90 to 110 (LQKL…NSLQ). Positions 128-146 (YEGYRQYVVATLPQLKWLD) constitute an LRRCT domain. Residues 177 to 288 (LRKRAAEREK…NRSEEELKKK (112 aa)) are a coiled coil. A disordered region spans residues 182–265 (AEREKATNNL…SQYTPESRLE (84 aa)). Positions 194–213 (KQKEGRKAQEKKPGFDRRWY) are enriched in basic and acidic residues. The CS domain maps to 303 to 395 (VNESKLDFSL…TEMIQTKRAK (93 aa)). Positions 447 to 470 (HRNSARDTADSEDFIDNAEVPPLV) are disordered.

Belongs to the tilB family.

It localises to the cytoplasm. It is found in the cell projection. The protein resides in the cilium. The protein localises to the dynein axonemal particle. Its subcellular location is the flagellum. Its function is as follows. Involved in dynein arm assembly, is important for expression and transporting outer dynein arm (ODA) proteins from the cytoplasm to the cilia. The protein is Dynein axonemal assembly factor 11 (dnaaf11) of Xenopus tropicalis (Western clawed frog).